Reading from the N-terminus, the 282-residue chain is Deoxyribonuclease-1 (282 aa).

An N-terminal signal peptide occupies residues 1–22 (MRGMKLLGALLALAALLQGAVS). An N-linked (GlcNAc...) asparagine glycan is attached at Asn-40. Glu-100 is a catalytic residue. Cys-123 and Cys-126 form a disulfide bridge. A glycan (N-linked (GlcNAc...) asparagine) is linked at Asn-128. His-156 is a catalytic residue. Cys-195 and Cys-231 are oxidised to a cystine.

The protein belongs to the DNase I family. The cofactor is Ca(2+). Mg(2+) is required as a cofactor. Principally in tissues of the digestive system. Highest levels found in urine, but also relatively abundant in semen and saliva.

The protein resides in the secreted. It is found in the zymogen granule. It localises to the nucleus envelope. It carries out the reaction Endonucleolytic cleavage to 5'-phosphodinucleotide and 5'-phosphooligonucleotide end-products.. In terms of biological role, serum endocuclease secreted into body fluids by a wide variety of exocrine and endocrine organs. Expressed by non-hematopoietic tissues and preferentially cleaves protein-free DNA. Among other functions, seems to be involved in cell death by apoptosis. Binds specifically to G-actin and blocks actin polymerization. Together with DNASE1L3, plays a key role in degrading neutrophil extracellular traps (NETs). NETs are mainly composed of DNA fibers and are released by neutrophils to bind pathogens during inflammation. Degradation of intravascular NETs by DNASE1 and DNASE1L3 is required to prevent formation of clots that obstruct blood vessels and cause organ damage following inflammation. This is Deoxyribonuclease-1 from Homo sapiens (Human).